Consider the following 491-residue polypeptide: Rab5 GDP/GTP exchange factor (491 aa).

The interval 1–74 is interaction with ubiquitinated proteins; the sequence is MSLKSERRGI…EEEAFASSQS (74 aa). The A20-type zinc-finger motif lies at 13–47; the sequence is DQSDLLCKKGCGYYGNPAWQGFCSKCWREEYHKAR. Residues cysteine 19, cysteine 23, cysteine 35, and cysteine 38 each contribute to the Zn(2+) site. A disordered region spans residues 66-85; that stretch reads EEAFASSQSSQGAQSLTFSK. Low complexity predominate over residues 69–84; sequence FASSQSSQGAQSLTFS. Serine 124 and serine 132 each carry phosphoserine. Residues lysine 151 and lysine 170 each carry the N6-acetyllysine modification. Positions 232–375 constitute a VPS9 domain; the sequence is EKKDLAIQKR…IEKLDAQSLN (144 aa). 4 positions are modified to phosphoserine: serine 373, serine 377, serine 390, and serine 400. The tract at residues 462–491 is disordered; it reads PPNQPLAAIDSENVENDKLPPPLQPQVYAG.

Interacts with RGS14; the interaction is GTP-dependent. Heterodimer with RABEP1. The heterodimer binds RAB4A and RAB5A that have been activated by GTP-binding. Interacts with RAB21, and with 100-fold lower affinity also with RAB22. Binds TSC2, GGA1, GGA2, GGA3, AP1G1 and AP1G2. Interacts with ubiquitinated EGFR. In terms of processing, monoubiquitinated.

Its subcellular location is the cytoplasm. The protein resides in the early endosome. It is found in the recycling endosome. Rab effector protein acting as linker between gamma-adaptin, RAB4A or RAB5A. Involved in endocytic membrane fusion and membrane trafficking of recycling endosomes. Stimulates nucleotide exchange on RAB5A. Can act as a ubiquitin ligase. In Homo sapiens (Human), this protein is Rab5 GDP/GTP exchange factor (RABGEF1).